We begin with the raw amino-acid sequence, 514 residues long: RNA polymerase sigma factor SigA (514 aa).

Positions 135–159 (AAKKATAKKAAAKKTTAKKTAAKKS) are enriched in basic residues. The tract at residues 135 to 205 (AAKKATAKKA…SDDDEDDAPA (71 aa)) is disordered. The interval 281 to 351 (LLEANLRLVV…TRAMADQART (71 aa)) is sigma-70 factor domain-2. An Interaction with polymerase core subunit RpoC motif is present at residues 305-308 (DLIQ). Positions 360–436 (EVINKLARVQ…DSEAVVPADA (77 aa)) are sigma-70 factor domain-3. The segment at 449–502 (VLDTLSEREAGVVSMRFGLTDGQPKTLDEIGKVYGVTRERIRQIESKTMSKLRH) is sigma-70 factor domain-4. Positions 475 to 494 (LDEIGKVYGVTRERIRQIES) form a DNA-binding region, H-T-H motif.

Belongs to the sigma-70 factor family. RpoD/SigA subfamily. As to quaternary structure, interacts transiently with the RNA polymerase catalytic core.

Its subcellular location is the cytoplasm. Functionally, sigma factors are initiation factors that promote the attachment of RNA polymerase to specific initiation sites and are then released. This sigma factor is the primary sigma factor during exponential growth. The polypeptide is RNA polymerase sigma factor SigA (Streptomyces griseus).